A 257-amino-acid chain; its full sequence is 14-3-3-like protein GF14-G (257 aa).

The protein belongs to the 14-3-3 family.

In terms of biological role, is associated with a DNA binding complex that binds to the G box, a well-characterized cis-acting DNA regulatory element found in plant genes. This Oryza sativa subsp. japonica (Rice) protein is 14-3-3-like protein GF14-G (GF14G).